A 293-amino-acid polypeptide reads, in one-letter code: 1D-myo-inositol 2-acetamido-2-deoxy-alpha-D-glucopyranoside deacetylase (293 aa).

Zn(2+)-binding residues include His16, Asp19, and His156.

Belongs to the MshB deacetylase family. It depends on Zn(2+) as a cofactor.

The enzyme catalyses 1D-myo-inositol 2-acetamido-2-deoxy-alpha-D-glucopyranoside + H2O = 1D-myo-inositol 2-amino-2-deoxy-alpha-D-glucopyranoside + acetate. Catalyzes the deacetylation of 1D-myo-inositol 2-acetamido-2-deoxy-alpha-D-glucopyranoside (GlcNAc-Ins) in the mycothiol biosynthesis pathway. The sequence is that of 1D-myo-inositol 2-acetamido-2-deoxy-alpha-D-glucopyranoside deacetylase from Nakamurella multipartita (strain ATCC 700099 / DSM 44233 / CIP 104796 / JCM 9543 / NBRC 105858 / Y-104) (Microsphaera multipartita).